The chain runs to 93 residues: Large ribosomal subunit protein eL42 (93 aa).

Residues Cys11, Cys14, Cys71, and Cys74 each coordinate Zn(2+). The C4-type zinc-finger motif lies at 11-74 (CPYCKKHTSH…IALRLVCDEC (64 aa)).

It belongs to the eukaryotic ribosomal protein eL42 family. In terms of assembly, part of the 50S ribosomal subunit. It depends on Zn(2+) as a cofactor.

Functionally, binds to the 23S rRNA. The chain is Large ribosomal subunit protein eL42 from Thermoplasma acidophilum (strain ATCC 25905 / DSM 1728 / JCM 9062 / NBRC 15155 / AMRC-C165).